A 126-amino-acid polypeptide reads, in one-letter code: MIKIDFDKMGGLIPAVIQDYQSGEVLMVAFMDQKTLDLTLKDGKTWFFSRTRNKYWMKGEESGNTQEVMEVLTDCDADTVVIKVKQNGPAACHTGNRSCFYVKWEDGQWVEHSNPLFDPNEVYKKG.

D74 lines the Mg(2+) pocket. C75 is a binding site for Zn(2+). 2 residues coordinate Mg(2+): D76 and D78. Positions 92 and 99 each coordinate Zn(2+).

It belongs to the PRA-CH family. Homodimer. Mg(2+) is required as a cofactor. Zn(2+) serves as cofactor.

It is found in the cytoplasm. The catalysed reaction is 1-(5-phospho-beta-D-ribosyl)-5'-AMP + H2O = 1-(5-phospho-beta-D-ribosyl)-5-[(5-phospho-beta-D-ribosylamino)methylideneamino]imidazole-4-carboxamide. Its pathway is amino-acid biosynthesis; L-histidine biosynthesis; L-histidine from 5-phospho-alpha-D-ribose 1-diphosphate: step 3/9. In terms of biological role, catalyzes the hydrolysis of the adenine ring of phosphoribosyl-AMP. This chain is Phosphoribosyl-AMP cyclohydrolase, found in Geotalea daltonii (strain DSM 22248 / JCM 15807 / FRC-32) (Geobacter daltonii).